The chain runs to 354 residues: G protein alpha o subunit (354 aa).

Residue G2 is the site of N-myristoyl glycine attachment. A lipid anchor (S-palmitoyl cysteine) is attached at C3. In terms of domain architecture, G-alpha spans 32–354 (KDIKLLLLGA…ANNLRGCGLY (323 aa)). The tract at residues 35 to 48 (KLLLLGAGESGKST) is G1 motif. GTP is bound by residues 40–47 (GAGESGKS), 176–182 (LRTRVKT), 201–205 (DVGGQ), 270–273 (NKKD), and A326. Positions 47 and 182 each coordinate Mg(2+). The segment at 174–182 (DILRTRVKT) is G2 motif. Residues 197-206 (FKLFDVGGQR) form a G3 motif region. Residues 266–273 (ILFLNKKD) form a G4 motif region. Positions 324-329 (TCATDT) are G5 motif.

This sequence belongs to the G-alpha family. G(i/o/t/z) subfamily. As to quaternary structure, g proteins are composed of 3 units; alpha, beta and gamma. The alpha chain contains the guanine nucleotide binding site. Expressed primarily in neuronal cell bodies in the brain, optic lobe, and thoracic and abdominal ganglia. Also expressed in antenna, oocytes and ovarian nurse cells.

Its function is as follows. Guanine nucleotide-binding proteins (G proteins) are involved as modulators or transducers in various transmembrane signaling systems. Plays a role in glial cell differentiation during embryogenesis; loco, Galphai and the G-protein coupled receptor, moody, are required in the surface glia to achieve effective insulation of the nerve cord. This chain is G protein alpha o subunit (Galphao), found in Drosophila melanogaster (Fruit fly).